We begin with the raw amino-acid sequence, 925 residues long: Periplasmic nitrate reductase (925 aa).

The segment at residues 1 to 30 (MDRREFIKSSAAAAACSAAGIAVPSSLSAA) is a signal peptide (tat-type signal). The region spanning 36–92 (WRWDKSACRFCGTGCGIMVATKNGKIVAVKGDPLAPVNRGLNCIKGYFNAKIMYGED) is the 4Fe-4S Mo/W bis-MGD-type domain. 4 residues coordinate [4Fe-4S] cluster: Cys-43, Cys-46, Cys-50, and Cys-78. Mo-bis(molybdopterin guanine dinucleotide) contacts are provided by residues Lys-80, Gln-148, Asn-173, Cys-177, 210–217 (WGANMAEM), Met-418, Gln-422, Asn-528, 553–554 (SD), Lys-576, Asp-603, and 815–824 (TGRVLEHWHS). Position 891 (Trp-891) interacts with substrate. Positions 899 and 916 each coordinate Mo-bis(molybdopterin guanine dinucleotide).

This sequence belongs to the prokaryotic molybdopterin-containing oxidoreductase family. NasA/NapA/NarB subfamily. In terms of assembly, component of the periplasmic nitrate reductase NapAB complex composed of NapA and NapB. It depends on [4Fe-4S] cluster as a cofactor. Requires Mo-bis(molybdopterin guanine dinucleotide) as cofactor. Post-translationally, predicted to be exported by the Tat system. The position of the signal peptide cleavage has not been experimentally proven.

The protein localises to the periplasm. The enzyme catalyses 2 Fe(II)-[cytochrome] + nitrate + 2 H(+) = 2 Fe(III)-[cytochrome] + nitrite + H2O. Functionally, catalytic subunit of the periplasmic nitrate reductase complex NapAB. Receives electrons from NapB and catalyzes the reduction of nitrate to nitrite. The polypeptide is Periplasmic nitrate reductase (Campylobacter fetus subsp. fetus (strain 82-40)).